Here is a 338-residue protein sequence, read N- to C-terminus: Ferredoxin--NADP reductase (338 aa).

Aspartate 35, glutamine 43, tyrosine 48, alanine 88, phenylalanine 122, aspartate 289, and threonine 330 together coordinate FAD.

The protein belongs to the ferredoxin--NADP reductase type 2 family. In terms of assembly, homodimer. FAD is required as a cofactor.

The enzyme catalyses 2 reduced [2Fe-2S]-[ferredoxin] + NADP(+) + H(+) = 2 oxidized [2Fe-2S]-[ferredoxin] + NADPH. The chain is Ferredoxin--NADP reductase from Ehrlichia canis (strain Jake).